Consider the following 128-residue polypeptide: Cytochrome b (128 aa).

The next 3 helical transmembrane spans lie at 25–45 (FGSM…FLAI), 69–90 (WIMQ…YIHI), and 105–125 (WLSG…XMCY). Heme b contacts are provided by H75 and H89. H126 contributes to the a ubiquinone binding site.

The protein belongs to the cytochrome b family. As to quaternary structure, the cytochrome bc1 complex contains 3 respiratory subunits (MT-CYB, CYC1 and UQCRFS1), 2 core proteins (UQCRC1 and UQCRC2) and probably 6 low-molecular weight proteins. It depends on heme b as a cofactor.

It localises to the mitochondrion inner membrane. Its function is as follows. Component of the ubiquinol-cytochrome c reductase complex (complex III or cytochrome b-c1 complex) that is part of the mitochondrial respiratory chain. The b-c1 complex mediates electron transfer from ubiquinol to cytochrome c. Contributes to the generation of a proton gradient across the mitochondrial membrane that is then used for ATP synthesis. This Crotalus viridis viridis (Prairie rattlesnake) protein is Cytochrome b (MT-CYB).